The sequence spans 142 residues: Large ribosomal subunit protein uL11 (142 aa).

A disordered region spans residues 84–103; that stretch reads AGVKSGSGRPNSDKVGTVTD.

Belongs to the universal ribosomal protein uL11 family. Part of the ribosomal stalk of the 50S ribosomal subunit. Interacts with L10 and the large rRNA to form the base of the stalk. L10 forms an elongated spine to which L12 dimers bind in a sequential fashion forming a multimeric L10(L12)X complex. One or more lysine residues are methylated.

Forms part of the ribosomal stalk which helps the ribosome interact with GTP-bound translation factors. The protein is Large ribosomal subunit protein uL11 of Aliivibrio salmonicida (strain LFI1238) (Vibrio salmonicida (strain LFI1238)).